Here is a 374-residue protein sequence, read N- to C-terminus: Homoserine O-succinyltransferase (374 aa).

In terms of domain architecture, AB hydrolase-1 spans 47–357 (NAILVCHALS…NFGHDSFLME (311 aa)). The active-site Nucleophile is the Ser153. Arg223 is a binding site for substrate. Catalysis depends on residues Asp318 and His351. Substrate is bound at residue Asp352.

It belongs to the AB hydrolase superfamily. MetX family. As to quaternary structure, homodimer.

The protein localises to the cytoplasm. The catalysed reaction is L-homoserine + succinyl-CoA = O-succinyl-L-homoserine + CoA. The protein operates within amino-acid biosynthesis; L-methionine biosynthesis via de novo pathway; O-succinyl-L-homoserine from L-homoserine: step 1/1. Transfers a succinyl group from succinyl-CoA to L-homoserine, forming succinyl-L-homoserine. This is Homoserine O-succinyltransferase from Dechloromonas aromatica (strain RCB).